The chain runs to 144 residues: Arsenate reductase ArsI1 (144 aa).

Catalysis depends on cysteine 14, which acts as the Nucleophile; cysteine thioarsenate intermediate.

The protein belongs to the ArsC family.

It catalyses the reaction [glutaredoxin]-dithiol + arsenate + glutathione + H(+) = glutathionyl-S-S-[glutaredoxin] + arsenite + H2O. Catalyzes the reduction of arsenate [As(V)] to arsenite [As(III)]. Does not constitute the major arsenate reductase in cells: essential only in the absence of ArsC (AC P74313). The polypeptide is Arsenate reductase ArsI1 (Synechocystis sp. (strain ATCC 27184 / PCC 6803 / Kazusa)).